The sequence spans 109 residues: Small ribosomal subunit protein bS20 (109 aa).

Residues 1-26 (MANIKSAKKRAIQSEKRRKHNASRRS) are disordered.

Belongs to the bacterial ribosomal protein bS20 family.

Functionally, binds directly to 16S ribosomal RNA. The protein is Small ribosomal subunit protein bS20 of Hamiltonella defensa subsp. Acyrthosiphon pisum (strain 5AT).